The primary structure comprises 179 residues: Warthog protein 3 (179 aa).

Residues 1 to 19 (MLYHVEMFTIILLFGFSLA) form the signal peptide. N-linked (GlcNAc...) asparagine glycans are attached at residues N52 and N147.

In terms of tissue distribution, expressed in the trinucleate pharyngeal gland cell g1, seam cells and hypodermis.

The protein localises to the secreted. Its function is as follows. Intercellular signal essential for a variety of patterning events during development. This chain is Warthog protein 3 (wrt-3), found in Caenorhabditis elegans.